The primary structure comprises 118 residues: NADH-quinone oxidoreductase subunit A (118 aa).

3 consecutive transmembrane segments (helical) span residues 6–26 (LIIG…LLTA), 61–81 (FMYG…LPWA), and 87–107 (LGLF…IGLW).

It belongs to the complex I subunit 3 family. In terms of assembly, NDH-1 is composed of 14 different subunits. Subunits NuoA, H, J, K, L, M, N constitute the membrane sector of the complex.

It is found in the cell membrane. It catalyses the reaction a quinone + NADH + 5 H(+)(in) = a quinol + NAD(+) + 4 H(+)(out). NDH-1 shuttles electrons from NADH, via FMN and iron-sulfur (Fe-S) centers, to quinones in the respiratory chain. The immediate electron acceptor for the enzyme in this species is believed to be a menaquinone. Couples the redox reaction to proton translocation (for every two electrons transferred, four hydrogen ions are translocated across the cytoplasmic membrane), and thus conserves the redox energy in a proton gradient. The chain is NADH-quinone oxidoreductase subunit A from Clostridium beijerinckii (strain ATCC 51743 / NCIMB 8052) (Clostridium acetobutylicum).